The chain runs to 359 residues: DNA polymerase IV (359 aa).

The 182-residue stretch at 7–188 folds into the UmuC domain; it reads IIHIDMDAFY…IPIGKFFGVG (182 aa). Aspartate 11 and aspartate 106 together coordinate Mg(2+). Residue glutamate 107 is part of the active site.

It belongs to the DNA polymerase type-Y family. Monomer. It depends on Mg(2+) as a cofactor.

The protein localises to the cytoplasm. The enzyme catalyses DNA(n) + a 2'-deoxyribonucleoside 5'-triphosphate = DNA(n+1) + diphosphate. Functionally, poorly processive, error-prone DNA polymerase involved in untargeted mutagenesis. Copies undamaged DNA at stalled replication forks, which arise in vivo from mismatched or misaligned primer ends. These misaligned primers can be extended by PolIV. Exhibits no 3'-5' exonuclease (proofreading) activity. May be involved in translesional synthesis, in conjunction with the beta clamp from PolIII. The polypeptide is DNA polymerase IV (Clostridium perfringens (strain ATCC 13124 / DSM 756 / JCM 1290 / NCIMB 6125 / NCTC 8237 / Type A)).